Consider the following 415-residue polypeptide: Corticotropin-releasing factor receptor 1 (415 aa).

The first 23 residues, 1 to 23 (MGRRPQLRLVKALLLLGLNSISA), serve as a signal peptide directing secretion. The Extracellular segment spans residues 24 to 111 (SLQDQHCESL…CQEILSEGEK (88 aa)). Cystine bridges form between Cys-30–Cys-54, Cys-44–Cys-87, and Cys-68–Cys-102. 6 N-linked (GlcNAc...) asparagine glycosylation sites follow: Asn-38, Asn-45, Asn-51, Asn-78, Asn-90, and Asn-98. Positions 99-108 (HSECQEILSE) are important for peptide agonist binding. The chain crosses the membrane as a helical span at residues 112 to 142 (SKAHYHIAVIINYLGHCISLAALLVAFVLFL). Topologically, residues 143–149 (RLRSIRC) are cytoplasmic. Residues 150–174 (VRNIIHWNLISAFILRNATWFVVQL) form a helical membrane-spanning segment. Residues 175–189 (TMSPEVHQSNVGWCR) are Extracellular-facing. A disulfide bond links Cys-188 and Cys-258. The helical transmembrane segment at 190-218 (LVTAAYNYFHVTNFFWMFGEGCYLHTAVV) threads the bilayer. The Cytoplasmic segment spans residues 219-225 (LTYSTDR). A helical transmembrane segment spans residues 226-253 (LRKWMFICIGWGVPFPIIVAWAIGKLYY). At 254 to 269 (DNEKCWFGKRPGVYTD) the chain is on the extracellular side. A helical transmembrane segment spans residues 270 to 295 (YIYQGPMILVLLINFIFLFNIVRILM). The segment at 280–290 (LLINFIFLFNI) is important for antagonist binding. The Cytoplasmic segment spans residues 296-306 (TKLRASTTSET). A Phosphoserine; by PKA modification is found at Ser-301. The helical transmembrane segment at 307 to 331 (IQYRKAVKATLVLLPLLGITYMLFF) threads the bilayer. Residues 332–338 (VNPGEDE) are Extracellular-facing. The helical transmembrane segment at 339–368 (VSRVVFIYFNSFLESFQGFFVSVFYCFLNS) threads the bilayer. The Cytoplasmic portion of the chain corresponds to 369–415 (EVRSAIRKRWHRWQDKHSIRARVARAMSIPTSPTRVSFHSIKQSTAV).

This sequence belongs to the G-protein coupled receptor 2 family. Heterodimer; heterodimerizes with GPER1. Interacts (via N-terminal extracellular domain) with CRH and UCN. Interacts with DLG1; this inhibits endocytosis of CRHR1 after agonist binding. C-terminal Ser or Thr residues may be phosphorylated. In terms of processing, phosphorylation at Ser-301 by PKA prevents maximal coupling to Gq-protein, and thereby negatively regulates downstream signaling.

It is found in the cell membrane. The protein localises to the endosome. Its function is as follows. G-protein coupled receptor for CRH (corticotropin-releasing factor) and UCN (urocortin). Has high affinity for CRH and UCN. Ligand binding causes a conformation change that triggers signaling via guanine nucleotide-binding proteins (G proteins) and down-stream effectors, such as adenylate cyclase. Promotes the activation of adenylate cyclase, leading to increased intracellular cAMP levels. Inhibits the activity of the calcium channel CACNA1H. Required for normal embryonic development of the adrenal gland and for normal hormonal responses to stress. Plays a role in the response to anxiogenic stimuli. The protein is Corticotropin-releasing factor receptor 1 (CRHR1) of Ovis aries (Sheep).